Here is a 260-residue protein sequence, read N- to C-terminus: Type III pantothenate kinase (260 aa).

6 to 13 lines the ATP pocket; the sequence is DCGNTNTV. 107-110 serves as a coordination point for substrate; sequence GPDR. D109 functions as the Proton acceptor in the catalytic mechanism. D129 contacts K(+). Residue T132 participates in ATP binding. T184 is a substrate binding site.

It belongs to the type III pantothenate kinase family. Homodimer. NH4(+) is required as a cofactor. K(+) serves as cofactor.

It localises to the cytoplasm. It catalyses the reaction (R)-pantothenate + ATP = (R)-4'-phosphopantothenate + ADP + H(+). Its pathway is cofactor biosynthesis; coenzyme A biosynthesis; CoA from (R)-pantothenate: step 1/5. Catalyzes the phosphorylation of pantothenate (Pan), the first step in CoA biosynthesis. In Ruegeria sp. (strain TM1040) (Silicibacter sp.), this protein is Type III pantothenate kinase.